The following is a 453-amino-acid chain: Bifunctional protein GlmU (453 aa).

A pyrophosphorylase region spans residues 1-227 (MTQLSVVILA…LMEVEGANNR (227 aa)). UDP-N-acetyl-alpha-D-glucosamine-binding positions include 9 to 12 (LAAG), Lys-23, Gln-74, 79 to 80 (GT), 101 to 103 (YGD), Gly-138, Glu-152, Asn-167, and Asn-225. Asp-103 is a binding site for Mg(2+). Asn-225 serves as a coordination point for Mg(2+). A linker region spans residues 228–248 (LQLAALERYYQKIQAEKLLLA). Residues 249–453 (GVTIIDPARF…IQGWQRPTKK (205 aa)) are N-acetyltransferase. Positions 331 and 349 each coordinate UDP-N-acetyl-alpha-D-glucosamine. Residue His-361 is the Proton acceptor of the active site. UDP-N-acetyl-alpha-D-glucosamine contacts are provided by Tyr-364 and Asn-375. Acetyl-CoA is bound by residues Ala-378, 384-385 (NY), Ser-403, Ala-421, and Arg-438.

The protein in the N-terminal section; belongs to the N-acetylglucosamine-1-phosphate uridyltransferase family. In the C-terminal section; belongs to the transferase hexapeptide repeat family. In terms of assembly, homotrimer. Mg(2+) serves as cofactor.

It localises to the cytoplasm. The enzyme catalyses alpha-D-glucosamine 1-phosphate + acetyl-CoA = N-acetyl-alpha-D-glucosamine 1-phosphate + CoA + H(+). It catalyses the reaction N-acetyl-alpha-D-glucosamine 1-phosphate + UTP + H(+) = UDP-N-acetyl-alpha-D-glucosamine + diphosphate. It participates in nucleotide-sugar biosynthesis; UDP-N-acetyl-alpha-D-glucosamine biosynthesis; N-acetyl-alpha-D-glucosamine 1-phosphate from alpha-D-glucosamine 6-phosphate (route II): step 2/2. The protein operates within nucleotide-sugar biosynthesis; UDP-N-acetyl-alpha-D-glucosamine biosynthesis; UDP-N-acetyl-alpha-D-glucosamine from N-acetyl-alpha-D-glucosamine 1-phosphate: step 1/1. It functions in the pathway bacterial outer membrane biogenesis; LPS lipid A biosynthesis. Catalyzes the last two sequential reactions in the de novo biosynthetic pathway for UDP-N-acetylglucosamine (UDP-GlcNAc). The C-terminal domain catalyzes the transfer of acetyl group from acetyl coenzyme A to glucosamine-1-phosphate (GlcN-1-P) to produce N-acetylglucosamine-1-phosphate (GlcNAc-1-P), which is converted into UDP-GlcNAc by the transfer of uridine 5-monophosphate (from uridine 5-triphosphate), a reaction catalyzed by the N-terminal domain. The chain is Bifunctional protein GlmU from Glaesserella parasuis serovar 5 (strain SH0165) (Haemophilus parasuis).